Here is a 179-residue protein sequence, read N- to C-terminus: Adenine phosphoribosyltransferase (179 aa).

The protein belongs to the purine/pyrimidine phosphoribosyltransferase family. Homodimer.

It localises to the cytoplasm. The catalysed reaction is AMP + diphosphate = 5-phospho-alpha-D-ribose 1-diphosphate + adenine. It functions in the pathway purine metabolism; AMP biosynthesis via salvage pathway; AMP from adenine: step 1/1. Functionally, catalyzes a salvage reaction resulting in the formation of AMP, that is energically less costly than de novo synthesis. In Histophilus somni (strain 129Pt) (Haemophilus somnus), this protein is Adenine phosphoribosyltransferase.